Consider the following 271-residue polypeptide: Putative cysteine protease YopT-like blr2140 (271 aa).

Residues 1 to 81 form a disordered region; sequence MYDRIGGSST…STSSPESPAT (81 aa). A compositionally biased stretch (polar residues) spans 7 to 29; the sequence is GSSTRTSQTDEPSQSVDSGSFTE. The segment covering 65–81 has biased composition (low complexity); that stretch reads TSSASEPSTSSPESPAT. C100 is an active-site residue. The segment at 114–136 is disordered; that stretch reads SPSTRMSALTPGSQTHASAAERQ. Catalysis depends on residues H213 and D228.

The protein belongs to the peptidase C58 family.

Functionally, potential cysteine protease, which may play a central role after invasion of host cell. The sequence is that of Putative cysteine protease YopT-like blr2140 from Bradyrhizobium diazoefficiens (strain JCM 10833 / BCRC 13528 / IAM 13628 / NBRC 14792 / USDA 110).